The sequence spans 239 residues: L-cystine transport system permease protein TcyL (239 aa).

In terms of domain architecture, ABC transmembrane type-1 spans 21–216 (LPVTLYILTL…AVAVLFEWFF (196 aa)). A run of 4 helical transmembrane segments spans residues 25 to 45 (LYIL…LALP), 69 to 89 (IMVQ…LIGI), 96 to 116 (PFYA…AEII), and 196 to 216 (EVYI…EWFF).

It belongs to the binding-protein-dependent transport system permease family. As to quaternary structure, the complex is composed of two ATP-binding proteins (TcyN), two transmembrane proteins (TcyL and TcyM) and two solute-binding proteins (TcyJ and TcyK).

Its subcellular location is the cell membrane. Its function is as follows. Part of the ABC transporter complex TcyJKLMN involved in L-cystine import. Probably responsible for the translocation of the substrate across the membrane. Is also involved in cystathionine, djenkolate, and S-methylcysteine transport. In Bacillus subtilis (strain 168), this protein is L-cystine transport system permease protein TcyL (tcyL).